We begin with the raw amino-acid sequence, 122 residues long: Small ribosomal subunit protein uS13c (122 aa).

Residues 102-122 (RTRTNARTRRGAKKTVAGKKK) form a disordered region.

The protein belongs to the universal ribosomal protein uS13 family. As to quaternary structure, part of the 30S ribosomal subunit.

It localises to the plastid. It is found in the chloroplast. In terms of biological role, located at the top of the head of the 30S subunit, it contacts several helices of the 16S rRNA. This Guillardia theta (Cryptophyte) protein is Small ribosomal subunit protein uS13c.